We begin with the raw amino-acid sequence, 196 residues long: dTTP/UTP pyrophosphatase (196 aa).

The active-site Proton acceptor is the D72.

It belongs to the Maf family. YhdE subfamily. Requires a divalent metal cation as cofactor.

Its subcellular location is the cytoplasm. The catalysed reaction is dTTP + H2O = dTMP + diphosphate + H(+). The enzyme catalyses UTP + H2O = UMP + diphosphate + H(+). Its function is as follows. Nucleoside triphosphate pyrophosphatase that hydrolyzes dTTP and UTP. May have a dual role in cell division arrest and in preventing the incorporation of modified nucleotides into cellular nucleic acids. The sequence is that of dTTP/UTP pyrophosphatase from Chlamydia felis (strain Fe/C-56) (Chlamydophila felis).